A 354-amino-acid chain; its full sequence is Trans-L-3-hydroxyproline dehydratase (354 aa).

Catalysis depends on cysteine 104, which acts as the Proton acceptor. Substrate contacts are provided by residues glycine 105 to histidine 106, aspartate 269, and glycine 274 to serine 275.

It belongs to the proline racemase family. As to quaternary structure, homodimer.

It catalyses the reaction trans-3-hydroxy-L-proline = 1-pyrroline-2-carboxylate + H2O. In terms of biological role, catalyzes the dehydration of trans-3-hydroxy-L-proline to delta-1-pyrroline-2-carboxylate (Pyr2C). In Pongo abelii (Sumatran orangutan), this protein is Trans-L-3-hydroxyproline dehydratase (L3HYPDH).